The chain runs to 142 residues: Large ribosomal subunit protein uL11 (142 aa).

It belongs to the universal ribosomal protein uL11 family. Part of the ribosomal stalk of the 50S ribosomal subunit. Interacts with L10 and the large rRNA to form the base of the stalk. L10 forms an elongated spine to which L12 dimers bind in a sequential fashion forming a multimeric L10(L12)X complex. In terms of processing, one or more lysine residues are methylated.

Functionally, forms part of the ribosomal stalk which helps the ribosome interact with GTP-bound translation factors. This Haemophilus ducreyi (strain 35000HP / ATCC 700724) protein is Large ribosomal subunit protein uL11.